Reading from the N-terminus, the 397-residue chain is Argininosuccinate synthase (397 aa).

ATP is bound at residue 8–16; it reads AYSGGLDTS. The L-citrulline site is built by tyrosine 86 and serine 91. ATP is bound at residue glycine 116. L-aspartate is bound by residues threonine 118, asparagine 122, and aspartate 123. Asparagine 122 provides a ligand contact to L-citrulline. L-citrulline is bound by residues arginine 126, serine 175, serine 184, glutamate 260, and tyrosine 272.

Belongs to the argininosuccinate synthase family. Type 1 subfamily. Homotetramer.

Its subcellular location is the cytoplasm. The catalysed reaction is L-citrulline + L-aspartate + ATP = 2-(N(omega)-L-arginino)succinate + AMP + diphosphate + H(+). Its pathway is amino-acid biosynthesis; L-arginine biosynthesis; L-arginine from L-ornithine and carbamoyl phosphate: step 2/3. In Clostridium botulinum (strain ATCC 19397 / Type A), this protein is Argininosuccinate synthase.